Here is a 91-residue protein sequence, read N- to C-terminus: Probable Fe(2+)-trafficking protein (91 aa).

Belongs to the Fe(2+)-trafficking protein family.

Functionally, could be a mediator in iron transactions between iron acquisition and iron-requiring processes, such as synthesis and/or repair of Fe-S clusters in biosynthetic enzymes. The protein is Probable Fe(2+)-trafficking protein of Xanthomonas axonopodis pv. citri (strain 306).